The chain runs to 454 residues: Mitochondrial dynamics protein MID49 (454 aa).

Residues 1–22 (MAEFSQKQRKQSGSEGLGSVVD) lie on the Mitochondrial intermembrane side of the membrane. A helical membrane pass occupies residues 23–43 (FLLANARLVLGVGGAAVLGIA). The Cytoplasmic portion of the chain corresponds to 44–454 (TLAVKRLIDR…SGLQVPESLF (411 aa)). Residues 76–113 (ATSPQKPQPPPAAFSQPLATGSPSPSVPVEPTPIHSPT) form a disordered region.

The protein belongs to the MID49/MID51 family. As to quaternary structure, interacts with DNM1L.

The protein localises to the mitochondrion outer membrane. Mitochondrial outer membrane protein which regulates mitochondrial organization. It is required for mitochondrial fission and promotes the recruitment and association of the fission mediator dynamin-related protein 1 (DNM1L) to the mitochondrial surface independently of the mitochondrial fission FIS1 and MFF proteins. Regulates DNM1L GTPase activity. In Mus musculus (Mouse), this protein is Mitochondrial dynamics protein MID49 (Mief2).